Consider the following 644-residue polypeptide: Macrolide export ATP-binding/permease protein MacB (644 aa).

The 239-residue stretch at 6–244 (LELDGVWRRF…SQATEAQPDG (239 aa)) folds into the ABC transporter domain. 42–49 (GASGSGKS) contacts ATP. 5 helical membrane passes run 271 to 291 (ALTMLGIVIGIASVVSVIAIG), 415 to 435 (EAVGRVILVGMVPATVIGVVA), 517 to 537 (LSLLLALVAVISLVVGGIGVM), 574 to 594 (LVCLVGGAIGVALSYGVSFVF), and 609 to 629 (VIALAVACSSLIGVLFGFLPA).

This sequence belongs to the ABC transporter superfamily. Macrolide exporter (TC 3.A.1.122) family. In terms of assembly, homodimer.

Its subcellular location is the cell inner membrane. Non-canonical ABC transporter that contains transmembrane domains (TMD), which form a pore in the inner membrane, and an ATP-binding domain (NBD), which is responsible for energy generation. Confers resistance against macrolides. The chain is Macrolide export ATP-binding/permease protein MacB from Chromobacterium violaceum (strain ATCC 12472 / DSM 30191 / JCM 1249 / CCUG 213 / NBRC 12614 / NCIMB 9131 / NCTC 9757 / MK).